Consider the following 389-residue polypeptide: Chaperone protein DnaJ (389 aa).

Residues 5–79 (KRDYYEVLGI…RKLYDQFGHE (75 aa)) enclose the J domain. The segment at 151-234 (GCNKTIKYER…CRSNKYTVTN (84 aa)) adopts a CR-type zinc-finger fold. Residues cysteine 164, cysteine 167, cysteine 182, cysteine 185, cysteine 208, cysteine 211, cysteine 222, and cysteine 225 each contribute to the Zn(2+) site. CXXCXGXG motif repeat units lie at residues 164 to 171 (CHSCNGFG), 182 to 189 (CKDCNGNG), 208 to 215 (CSTCNGQG), and 222 to 229 (CKTCRSNK).

The protein belongs to the DnaJ family. In terms of assembly, homodimer. It depends on Zn(2+) as a cofactor.

It localises to the cytoplasm. In terms of biological role, participates actively in the response to hyperosmotic and heat shock by preventing the aggregation of stress-denatured proteins and by disaggregating proteins, also in an autonomous, DnaK-independent fashion. Unfolded proteins bind initially to DnaJ; upon interaction with the DnaJ-bound protein, DnaK hydrolyzes its bound ATP, resulting in the formation of a stable complex. GrpE releases ADP from DnaK; ATP binding to DnaK triggers the release of the substrate protein, thus completing the reaction cycle. Several rounds of ATP-dependent interactions between DnaJ, DnaK and GrpE are required for fully efficient folding. Also involved, together with DnaK and GrpE, in the DNA replication of plasmids through activation of initiation proteins. In Mycoplasma genitalium (strain ATCC 33530 / DSM 19775 / NCTC 10195 / G37) (Mycoplasmoides genitalium), this protein is Chaperone protein DnaJ.